A 161-amino-acid polypeptide reads, in one-letter code: Small ribosomal subunit protein uS19 (161 aa).

Positions 1–19 (MARQKKYSGKGGARKKNKQ) are enriched in basic residues. The tract at residues 1 to 26 (MARQKKYSGKGGARKKNKQKQSVAPR) is disordered.

It belongs to the universal ribosomal protein uS19 family.

Its function is as follows. Protein S19 forms a complex with S13 that binds strongly to the 16S ribosomal RNA. The chain is Small ribosomal subunit protein uS19 from Methanococcus maripaludis (strain C7 / ATCC BAA-1331).